The primary structure comprises 346 residues: Holliday junction branch migration complex subunit RuvB (346 aa).

The span at 1-11 shows a compositional bias: polar residues; sequence MTEQRTIASSA. Residues 1-20 form a disordered region; sequence MTEQRTIASSATREDEAADA. The tract at residues 1–183 is large ATPase domain (RuvB-L); sequence MTEQRTIASS…FGIVQRLEFY (183 aa). ATP-binding positions include I22, R23, G64, K67, T68, T69, 130 to 132, R173, Y183, and R220; that span reads EDF. T68 provides a ligand contact to Mg(2+). Residues 184-254 are small ATPAse domain (RuvB-S); sequence SPQELTRIVI…VAQAAMQMLK (71 aa). The head domain (RuvB-H) stretch occupies residues 257 to 346; it reads PEGFDELDRR…PAIGEPGDLF (90 aa). Residues R293, R312, and R317 each contribute to the DNA site.

Belongs to the RuvB family. In terms of assembly, homohexamer. Forms an RuvA(8)-RuvB(12)-Holliday junction (HJ) complex. HJ DNA is sandwiched between 2 RuvA tetramers; dsDNA enters through RuvA and exits via RuvB. An RuvB hexamer assembles on each DNA strand where it exits the tetramer. Each RuvB hexamer is contacted by two RuvA subunits (via domain III) on 2 adjacent RuvB subunits; this complex drives branch migration. In the full resolvosome a probable DNA-RuvA(4)-RuvB(12)-RuvC(2) complex forms which resolves the HJ.

The protein resides in the cytoplasm. The catalysed reaction is ATP + H2O = ADP + phosphate + H(+). The RuvA-RuvB-RuvC complex processes Holliday junction (HJ) DNA during genetic recombination and DNA repair, while the RuvA-RuvB complex plays an important role in the rescue of blocked DNA replication forks via replication fork reversal (RFR). RuvA specifically binds to HJ cruciform DNA, conferring on it an open structure. The RuvB hexamer acts as an ATP-dependent pump, pulling dsDNA into and through the RuvAB complex. RuvB forms 2 homohexamers on either side of HJ DNA bound by 1 or 2 RuvA tetramers; 4 subunits per hexamer contact DNA at a time. Coordinated motions by a converter formed by DNA-disengaged RuvB subunits stimulates ATP hydrolysis and nucleotide exchange. Immobilization of the converter enables RuvB to convert the ATP-contained energy into a lever motion, pulling 2 nucleotides of DNA out of the RuvA tetramer per ATP hydrolyzed, thus driving DNA branch migration. The RuvB motors rotate together with the DNA substrate, which together with the progressing nucleotide cycle form the mechanistic basis for DNA recombination by continuous HJ branch migration. Branch migration allows RuvC to scan DNA until it finds its consensus sequence, where it cleaves and resolves cruciform DNA. This is Holliday junction branch migration complex subunit RuvB from Xanthomonas campestris pv. campestris (strain ATCC 33913 / DSM 3586 / NCPPB 528 / LMG 568 / P 25).